The primary structure comprises 248 residues: ATP synthase subunit a (248 aa).

A run of 5 helical transmembrane segments spans residues 31-51, 90-110, 129-149, 195-215, and 216-236; these read GQVLIASWIAIALILTVVILG, VPYVGTLFLFIFVSNWMGNLF, INTTAGLALLTSIMYFVAGIS, VIAVLVLLVPLFIPVPVMVLF, and LFTGAIQALIFSTLSAAYIGE.

The protein belongs to the ATPase A chain family. In terms of assembly, F-type ATPases have 2 components, CF(1) - the catalytic core - and CF(0) - the membrane proton channel. CF(1) has five subunits: alpha(3), beta(3), gamma(1), delta(1), epsilon(1). CF(0) has four main subunits: a, b, b' and c.

It localises to the cellular thylakoid membrane. Key component of the proton channel; it plays a direct role in the translocation of protons across the membrane. The protein is ATP synthase subunit a of Synechococcus sp. (strain JA-2-3B'a(2-13)) (Cyanobacteria bacterium Yellowstone B-Prime).